The chain runs to 492 residues: Phosphoenolpyruvate carboxylase (492 aa).

It belongs to the PEPCase type 2 family. In terms of assembly, homotetramer. Mg(2+) serves as cofactor.

The catalysed reaction is oxaloacetate + phosphate = phosphoenolpyruvate + hydrogencarbonate. Its function is as follows. Catalyzes the irreversible beta-carboxylation of phosphoenolpyruvate (PEP) to form oxaloacetate (OAA), a four-carbon dicarboxylic acid source for the tricarboxylic acid cycle. This Halobacterium salinarum (strain ATCC 29341 / DSM 671 / R1) protein is Phosphoenolpyruvate carboxylase.